The following is a 555-amino-acid chain: Cyclin-T1.2 (555 aa).

2 disordered regions span residues 315-429 and 505-555; these read SYKG…NSSK and PADS…GELV. The segment covering 321–335 has biased composition (low complexity); it reads KPLSNSSDSPSTRPS. The segment covering 341–359 has biased composition (basic and acidic residues); that stretch reads KNQKVVEQELMEQRMKEAA. The span at 382-398 shows a compositional bias: low complexity; the sequence is TSSSASNNSNHQNRSSS. Residues 521 to 543 show a composition bias toward pro residues; that stretch reads PDEPSPPVSQILLPPPPPPPILP.

The protein belongs to the cyclin family. Cyclin C subfamily.

Regulatory subunit of the cyclin-dependent kinase pair (CDK9/cyclin T) complex, also called positive transcription elongation factor B (P-TEFb), which is proposed to facilitate the transition from abortive to production elongation by phosphorylating the CTD (carboxy-terminal domain) of the large subunit of RNA polymerase II (RNAP II). This chain is Cyclin-T1.2 (cit-1.2), found in Caenorhabditis elegans.